The sequence spans 144 residues: Small ribosomal subunit protein uS19 (144 aa).

Belongs to the universal ribosomal protein uS19 family.

The sequence is that of Small ribosomal subunit protein uS19 (rps15) from Dictyostelium discoideum (Social amoeba).